The primary structure comprises 166 residues: Regulator of ribonuclease activity A (166 aa).

Belongs to the RraA family. Homotrimer. Binds to both RNA-binding sites in the C-terminal region of Rne and to RhlB.

Its subcellular location is the cytoplasm. Functionally, globally modulates RNA abundance by binding to RNase E (Rne) and regulating its endonucleolytic activity. Can modulate Rne action in a substrate-dependent manner by altering the composition of the degradosome. Modulates RNA-binding and helicase activities of the degradosome. The sequence is that of Regulator of ribonuclease activity A from Pasteurella multocida (strain Pm70).